The following is a 365-amino-acid chain: Methylthioribose-1-phosphate isomerase (365 aa).

Aspartate 255 serves as the catalytic Proton donor.

Belongs to the eIF-2B alpha/beta/delta subunits family. MtnA subfamily.

The protein localises to the cytoplasm. Its subcellular location is the nucleus. It carries out the reaction 5-(methylsulfanyl)-alpha-D-ribose 1-phosphate = 5-(methylsulfanyl)-D-ribulose 1-phosphate. Its pathway is amino-acid biosynthesis; L-methionine biosynthesis via salvage pathway; L-methionine from S-methyl-5-thio-alpha-D-ribose 1-phosphate: step 1/6. In terms of biological role, catalyzes the interconversion of methylthioribose-1-phosphate (MTR-1-P) into methylthioribulose-1-phosphate (MTRu-1-P). The sequence is that of Methylthioribose-1-phosphate isomerase from Drosophila willistoni (Fruit fly).